The sequence spans 251 residues: Sugar fermentation stimulation protein homolog (251 aa).

It belongs to the SfsA family.

This is Sugar fermentation stimulation protein homolog from Prochlorococcus marinus (strain MIT 9313).